Consider the following 1640-residue polypeptide: Phospholipase D C (1640 aa).

Positions 122-132 (SHRSNQSFNHS) are enriched in polar residues. Disordered stretches follow at residues 122–247 (SHRS…KRLS), 264–283 (HNQN…HTTT), 439–499 (EKQQ…YKYN), and 521–541 (DDEY…PSQE). The span at 133 to 193 (NSTTPLNTTN…YSSDNSYLHN (61 aa)) shows a compositional bias: low complexity. Positions 197–231 (DIYEDEDDEDDEDDDDDEDEDDEGKEFEQDDEDES) are enriched in acidic residues. Positions 232–247 (TISSMSLKNSQAKRLS) are enriched in polar residues. Composition is skewed to low complexity over residues 264 to 273 (HNQNHQNHQN) and 467 to 499 (TTTT…YKYN). Residues 521 to 534 (DDEYYYGEYDDEDD) are compositionally biased toward acidic residues. One can recognise a PLD phosphodiesterase 1 domain in the interval 1009 to 1036 (LYWSHHQKVVVVDQRIAFIGGLDLCFGR). Active-site residues include H1014, K1016, and D1021. Low complexity-rich tracts occupy residues 1149–1274 (INNN…NNLN) and 1282–1296 (HNNS…QQQQ). The interval 1149 to 1315 (INNNNNNANN…YQPPLPPQQR (167 aa)) is disordered. Over residues 1297–1306 (QHHHHHHHHY) the composition is skewed to basic residues. A PLD phosphodiesterase 2 domain is found at 1460–1487 (EQIYVHSKVLIVDDKIAIIGSANINDRS). Residues H1465, K1467, and D1472 contribute to the active site.

Belongs to the phospholipase D family.

The catalysed reaction is a 1,2-diacyl-sn-glycero-3-phosphocholine + H2O = a 1,2-diacyl-sn-glycero-3-phosphate + choline + H(+). With respect to regulation, inhibited by butan-1-ol. In terms of biological role, plays a role in cell growth. Hydrolyzes membrane phospholipids, such as PtdCho (phosphatidylcholine), producing the free headgroup and PtdOH (phosphatidic acid; signaling molecule on its own). Involved in the inhibition of actin-based motility and endocytosis. Its inhibition causes complete collapse of F-actin organization. The sequence is that of Phospholipase D C (pldC) from Dictyostelium discoideum (Social amoeba).